Here is a 97-residue protein sequence, read N- to C-terminus: Large ribosomal subunit protein eL21 (97 aa).

Residues 1–23 (MTKMSKGPRSGSRRVMTKSVKNK) form a disordered region.

This sequence belongs to the eukaryotic ribosomal protein eL21 family.

This is Large ribosomal subunit protein eL21 from Picrophilus torridus (strain ATCC 700027 / DSM 9790 / JCM 10055 / NBRC 100828 / KAW 2/3).